Consider the following 284-residue polypeptide: Ribosomal RNA small subunit methyltransferase A (284 aa).

The S-adenosyl-L-methionine site is built by N26, L28, G53, E74, D97, and N127.

The protein belongs to the class I-like SAM-binding methyltransferase superfamily. rRNA adenine N(6)-methyltransferase family. RsmA subfamily.

The protein resides in the cytoplasm. The catalysed reaction is adenosine(1518)/adenosine(1519) in 16S rRNA + 4 S-adenosyl-L-methionine = N(6)-dimethyladenosine(1518)/N(6)-dimethyladenosine(1519) in 16S rRNA + 4 S-adenosyl-L-homocysteine + 4 H(+). Specifically dimethylates two adjacent adenosines (A1518 and A1519) in the loop of a conserved hairpin near the 3'-end of 16S rRNA in the 30S particle. May play a critical role in biogenesis of 30S subunits. This is Ribosomal RNA small subunit methyltransferase A from Anaeromyxobacter dehalogenans (strain 2CP-C).